The following is a 450-amino-acid chain: MFNNLTERLSQSLRKIINKGRLTEENIKDTIREVRKALLEADVTLSVIKKFIQNVSKKAIGHEINKSLTPGQEFIKIVKNELILSMGEKNHDLNLSIQPPAIILVVGLQGVGKTTTLVKLAKWIKEKYKKKILTVSTDIYRAAAIKQLQILSDQVKIDFYLSDTTQTPINITKEAIEHAKLKLYDLLLIDTAGRLHINTEMMNEINTIQNISKPIETLLIVDSMMGQDAINIAKKFSASLSISGIVITKTDSDARSGVALSIRHITGKPIKFIGTGEKLHQLEPFHPERIADRILGMNQVISLIKDIEEKVNQSQVKNLTKKFRKGDDFNLNDFLIQLKEMKNMGNLNYFIEKFSKNKILSNNPLLGENKNTLNRIEAIIYSMTHKERMHPIIIKGSRKRRIALGSGTKIQDVNKLLKNFDNIKKIMKKIKKGGIGKMIRNISNILPKNF.

GTP is bound by residues 107-114, 190-194, and 248-251; these read GLQGVGKT, DTAGR, and TKTD.

It belongs to the GTP-binding SRP family. SRP54 subfamily. Part of the signal recognition particle protein translocation system, which is composed of SRP and FtsY. SRP is a ribonucleoprotein composed of Ffh and a 4.5S RNA molecule.

The protein resides in the cytoplasm. It carries out the reaction GTP + H2O = GDP + phosphate + H(+). Functionally, involved in targeting and insertion of nascent membrane proteins into the cytoplasmic membrane. Binds to the hydrophobic signal sequence of the ribosome-nascent chain (RNC) as it emerges from the ribosomes. The SRP-RNC complex is then targeted to the cytoplasmic membrane where it interacts with the SRP receptor FtsY. Interaction with FtsY leads to the transfer of the RNC complex to the Sec translocase for insertion into the membrane, the hydrolysis of GTP by both Ffh and FtsY, and the dissociation of the SRP-FtsY complex into the individual components. In Buchnera aphidicola subsp. Schizaphis graminum (strain Sg), this protein is Signal recognition particle protein.